The primary structure comprises 461 residues: ADP-specific phosphofructokinase (461 aa).

In terms of domain architecture, ADPK spans 1–457; the sequence is MVRELLEKAR…FASYLAMLKE (457 aa). Mg(2+) contacts are provided by Glu268, Glu298, and Asp441. Asp441 (proton acceptor) is an active-site residue.

This sequence belongs to the carbohydrate kinase PfkC family. Mg(2+) serves as cofactor.

It is found in the cytoplasm. The catalysed reaction is beta-D-fructose 6-phosphate + ADP = beta-D-fructose 1,6-bisphosphate + AMP + H(+). Its pathway is carbohydrate degradation; glycolysis. Its function is as follows. Catalyzes the phosphorylation of fructose 6-phosphate to fructose 1,6-bisphosphate using ADP as the phosphate donor. This Thermococcus zilligii protein is ADP-specific phosphofructokinase.